Consider the following 251-residue polypeptide: tRNA (guanine-N(7)-)-methyltransferase (251 aa).

Residues 1-43 form a disordered region; sequence MQPNEQPGTGPADTTLEQQDTAAAEVGHPRRIRSFVRRAGRTS. Residues 29–40 show a composition bias toward basic residues; that stretch reads PRRIRSFVRRAG. Positions 82, 107, 134, and 157 each coordinate S-adenosyl-L-methionine. D157 is an active-site residue. K161 provides a ligand contact to substrate. The interaction with RNA stretch occupies residues 163 to 168; it reads RHNKRR. Residues D193 and 228 to 231 each bind substrate; that span reads TKFE.

This sequence belongs to the class I-like SAM-binding methyltransferase superfamily. TrmB family.

The catalysed reaction is guanosine(46) in tRNA + S-adenosyl-L-methionine = N(7)-methylguanosine(46) in tRNA + S-adenosyl-L-homocysteine. It participates in tRNA modification; N(7)-methylguanine-tRNA biosynthesis. Its function is as follows. Catalyzes the formation of N(7)-methylguanine at position 46 (m7G46) in tRNA. The polypeptide is tRNA (guanine-N(7)-)-methyltransferase (Ralstonia nicotianae (strain ATCC BAA-1114 / GMI1000) (Ralstonia solanacearum)).